Consider the following 396-residue polypeptide: Chorismate synthase (396 aa).

Arg41 and Arg47 together coordinate NADP(+). FMN is bound by residues 130-132 (RAS), Gly298, 313-317 (KPIPT), and Arg339.

This sequence belongs to the chorismate synthase family. In terms of assembly, homotetramer. FMNH2 is required as a cofactor.

The catalysed reaction is 5-O-(1-carboxyvinyl)-3-phosphoshikimate = chorismate + phosphate. It participates in metabolic intermediate biosynthesis; chorismate biosynthesis; chorismate from D-erythrose 4-phosphate and phosphoenolpyruvate: step 7/7. Its function is as follows. Catalyzes the anti-1,4-elimination of the C-3 phosphate and the C-6 proR hydrogen from 5-enolpyruvylshikimate-3-phosphate (EPSP) to yield chorismate, which is the branch point compound that serves as the starting substrate for the three terminal pathways of aromatic amino acid biosynthesis. This reaction introduces a second double bond into the aromatic ring system. The chain is Chorismate synthase from Syntrophomonas wolfei subsp. wolfei (strain DSM 2245B / Goettingen).